The sequence spans 602 residues: Beta-(1--&gt;2)glucan export ATP-binding/permease protein NdvA (602 aa).

An ABC transmembrane type-1 domain is found at 21 to 306; that stretch reads GWLLAFANLL…VVSFINNVFM (286 aa). The next 6 membrane-spanning stretches (helical) occupy residues 22–42, 63–83, 141–161, 163–183, 240–262, and 280–300; these read WLLA…PVLF, FLAA…LVAL, EHFA…YLNW, LAIL…FVVR, VLSW…VLAI, and IVMF…VVSF. Residues 340-573 enclose the ABC transporter domain; the sequence is VEFNDVTFSY…GGHFAELARA (234 aa). An ATP-binding site is contributed by 373-380; that stretch reads GPTGAGKS.

This sequence belongs to the ABC transporter superfamily. Beta-(1--&gt;2)glucan exporter (TC 3.A.1.108.1) family. Homodimer.

Its subcellular location is the cell inner membrane. It catalyses the reaction [(1-&gt;2)-beta-D-glucosyl](n)(in) + ATP + H2O = [(1-&gt;2)-beta-D-glucosyl](n)(out) + ADP + phosphate + H(+). Its function is as follows. Involved in beta-(1--&gt;2)glucan export. Transmembrane domains (TMD) form a pore in the inner membrane and the ATP-binding domain (NBD) is responsible for energy generation. This chain is Beta-(1--&gt;2)glucan export ATP-binding/permease protein NdvA, found in Bradyrhizobium diazoefficiens (strain JCM 10833 / BCRC 13528 / IAM 13628 / NBRC 14792 / USDA 110).